A 118-amino-acid chain; its full sequence is D-dopachrome decarboxylase (118 aa).

Residue P2 is modified to N-acetylproline. K33 bears the N6-acetyllysine mark.

The protein belongs to the MIF family. Homotrimer. As to expression, highly expressed in the liver and at lower levels in the heart, lung and pancreas.

It is found in the cytoplasm. The catalysed reaction is D-dopachrome + H(+) = 5,6-dihydroxyindole + CO2. Its function is as follows. Tautomerization of D-dopachrome with decarboxylation to give 5,6-dihydroxyindole (DHI). The polypeptide is D-dopachrome decarboxylase (DDT) (Homo sapiens (Human)).